The sequence spans 613 residues: Histone acetyltransferase KAT7 (613 aa).

Residues 1 to 175 (MAIGVVKRNA…SDLSHRPKRR (175 aa)) form a disordered region. 5 positions are modified to phosphoserine: S12, S52, S55, S59, and S66. A compositionally biased stretch (low complexity) spans 44 to 59 (VTRSSARLSQSSQDSS). Phosphothreonine is present on residues T87 and T90. The span at 98-107 (QTRSSGSETE) shows a compositional bias: polar residues. At S104 the chain carries Phosphoserine. At T106 the chain carries Phosphothreonine. A compositionally biased stretch (basic and acidic residues) spans 112–127 (FSDRETKNTADHDESP). 2 positions are modified to phosphoserine: S113 and S126. The residue at position 130 (T130) is a Phosphothreonine. Residues 136–147 (PSSESDIDISSP) are compositionally biased toward low complexity. Residues 150 to 170 (SHDESIAKDMSLKDSGSDLSH) show a composition bias toward basic and acidic residues. Residues S160, S164, S166, and S180 each carry the phosphoserine modification. A CCHHC-type zinc finger spans residues 178 to 221 (HESYNFNMKCPTPGCNSLGHLTGKHERHFSISGCPLYHNLSADE). An N6-acetyllysine mark is found at K201 and K279. K325 is covalently cross-linked (Glycyl lysine isopeptide (Lys-Gly) (interchain with G-Cter in SUMO2)). The region spanning 334–609 (EGSNMIKTIA…MDPSCLKWTP (276 aa)) is the MYST-type HAT domain. A Glycyl lysine isopeptide (Lys-Gly) (interchain with G-Cter in ubiquitin) cross-link involves residue K340. The segment at 367 to 392 (LYMCEFCLKYMKSQTILRRHMAKCVW) adopts a C2HC MYST-type zinc-finger fold. Residues C370, C373, H386, and C390 each contribute to the Zn(2+) site. Residue K434 is modified to N6-acetyllysine; by autocatalysis. Acetyl-CoA is bound by residues 477-479 (ILT) and 485-490 (RQGYGK). S508 bears the Phosphoserine mark. E510 functions as the Proton donor/acceptor in the catalytic mechanism. Acetyl-CoA contacts are provided by S514 and S523.

It belongs to the MYST (SAS/MOZ) family. As to quaternary structure, component of the HBO1 complex composed of KAT7/HBO1, MEAF6, ING4 or ING5, and one scaffold subunit: complexes containing BRPF scaffold (BRPF1, BRD1/BRPF2 or BRPF3) direct KAT7/HBO1 specificity towards H3K14ac, while complexes containing JADE scaffold (JADE1, JADE2 and JADE3) mediate acetylation of histone H4. Interacts with MCM2 and ORC1. Interacts with the androgen receptor (AR) in the presence of dihydrotestosterone. Interacts with CDT1. Interacts with MAP2K1 and CUL1. Interacts with p53/TP53; leading to inhibit histone acetyltransferase activity. Phosphorylated at Ser-52 and Ser-55 by ATR in response to DNA damage, promoting its ubiquitination by the CRL4(DDB2) complex and subsequent degradation. Phosphorylation at Ser-52 and Ser-55 by ATR in response to ultraviolet-induced DNA, promotes localization to DNA damage sites. Phosphorylation at Ser-59 by PLK1 during mitosis seems important for prereplicative complex formation and DNA replication licensing, and requires prior phosphorylation at Thr-87 and Thr-90 by CDK1. Phosphorylated by MAP2K1, which accelerates its degradation. In terms of processing, ubiquitinated at Lys-340, leading to proteasomal degradation. Ubiquitinated by the CRL4(DDB2) complex following phosphorylation by ATR, leading to its subsequent degradation. Post-translationally, autoacetylation at Lys-434 is required for proper function. As to expression, widely expressed in adult tissues.

It is found in the nucleus. The protein localises to the chromosome. The protein resides in the centromere. It localises to the cytoplasm. Its subcellular location is the cytosol. It carries out the reaction L-lysyl-[protein] + acetyl-CoA = N(6)-acetyl-L-lysyl-[protein] + CoA + H(+). Its activity is regulated as follows. Histone acetyltransferase activity is inhibited by GMNN in the context of a complex with CDT1, inhibiting histone H4 acetylation and DNA replication licensing. In terms of biological role, catalytic subunit of histone acetyltransferase HBO1 complexes, which specifically mediate acetylation of histone H3 at 'Lys-14' (H3K14ac), thereby regulating various processes, such as gene transcription, protein ubiquitination, immune regulation, stem cell pluripotent and self-renewal maintenance and embryonic development. Some complexes also catalyze acetylation of histone H4 at 'Lys-5', 'Lys-8' and 'Lys-12' (H4K5ac, H4K8ac and H4K12ac, respectively), regulating DNA replication initiation, regulating DNA replication initiation. Specificity of the HBO1 complexes is determined by the scaffold subunit: complexes containing BRPF scaffold (BRPF1, BRD1/BRPF2 or BRPF3) direct KAT7/HBO1 specificity towards H3K14ac, while complexes containing JADE (JADE1, JADE2 and JADE3) scaffold direct KAT7/HBO1 specificity towards histone H4. H3K14ac promotes transcriptional elongation by facilitating the processivity of RNA polymerase II. Acts as a key regulator of hematopoiesis by forming a complex with BRD1/BRPF2, directing KAT7/HBO1 specificity towards H3K14ac and promoting erythroid differentiation. H3K14ac is also required for T-cell development. KAT7/HBO1-mediated acetylation facilitates two consecutive steps, licensing and activation, in DNA replication initiation: H3K14ac facilitates the activation of replication origins, and histone H4 acetylation (H4K5ac, H4K8ac and H4K12ac) facilitates chromatin loading of MCM complexes, promoting DNA replication licensing. Acts as a positive regulator of centromeric CENPA assembly: recruited to centromeres and mediates histone acetylation, thereby preventing centromere inactivation mediated by SUV39H1, possibly by increasing histone turnover/exchange. Involved in nucleotide excision repair: phosphorylation by ATR in response to ultraviolet irradiation promotes its localization to DNA damage sites, where it mediates histone acetylation to facilitate recruitment of XPC at the damaged DNA sites. Acts as an inhibitor of NF-kappa-B independently of its histone acetyltransferase activity. Plays a central role in the maintenance of leukemia stem cells in acute myeloid leukemia (AML). Acts by mediating acetylation of histone H3 at 'Lys-14' (H3K14ac), thereby facilitating the processivity of RNA polymerase II to maintain the high expression of key genes, such as HOXA9 and HOXA10 that help to sustain the functional properties of leukemia stem cells. This chain is Histone acetyltransferase KAT7, found in Mus musculus (Mouse).